The chain runs to 164 residues: Thiol peroxidase (164 aa).

One can recognise a Thioredoxin domain in the interval 16 to 162 (LQVGEIAHDF…YDAAIEAVKV (147 aa)). Catalysis depends on Cys-58, which acts as the Cysteine sulfenic acid (-SOH) intermediate. A disulfide bridge links Cys-58 with Cys-92.

The protein belongs to the peroxiredoxin family. Tpx subfamily. As to quaternary structure, homodimer.

It carries out the reaction a hydroperoxide + [thioredoxin]-dithiol = an alcohol + [thioredoxin]-disulfide + H2O. Functionally, thiol-specific peroxidase that catalyzes the reduction of hydrogen peroxide and organic hydroperoxides to water and alcohols, respectively. Plays a role in cell protection against oxidative stress by detoxifying peroxides. The chain is Thiol peroxidase from Streptococcus parasanguinis.